The sequence spans 232 residues: Large ribosomal subunit protein uL1 (232 aa).

It belongs to the universal ribosomal protein uL1 family. Part of the 50S ribosomal subunit.

In terms of biological role, binds directly to 23S rRNA. The L1 stalk is quite mobile in the ribosome, and is involved in E site tRNA release. Functionally, protein L1 is also a translational repressor protein, it controls the translation of the L11 operon by binding to its mRNA. This chain is Large ribosomal subunit protein uL1, found in Liberibacter asiaticus (Citrus greening disease).